The chain runs to 4351 residues: Protocadherin Fat 2 (4351 aa).

The signal sequence occupies residues 1-18; it reads MTLVLLGLAILLLHRAAC. Over 19-4050 the chain is Extracellular; the sequence is EKSLEETIPP…IKRGDWGQQE (4032 aa). Cadherin domains follow at residues 34–148 and 149–256; these read THSL…KPLF and SPPS…PPAI. 4 N-linked (GlcNAc...) asparagine glycosylation sites follow: N39, N210, N280, and N330. Cadherin domains follow at residues 363-458, 459-564, 565-669, 716-820, 821-925, 926-1032, 1033-1142, 1138-1242, 1243-1346, 1350-1448, 1449-1555, 1556-1660, 1661-1758, 1759-1872, 1873-1968, 1969-2070, 2071-2171, 2172-2272, 2273-2379, 2380-2481, 2482-2585, 2586-2692, 2693-2799, 2800-2908, 2909-3013, 3014-3115, 3116-3220, 3221-3323, 3324-3428, 3429-3533, and 3534-3631; these read EKAV…APVF, NRSS…QPMF, EEVN…VPVQ, DHFP…PPRF, PPGG…PPQC, ITEH…SPHF, SSFV…RPVF, SRPV…PPMF, SHKL…SSIP, DESY…RPQF, LQDH…SPHF, TQLR…APVF, SKDE…PPAF, GKPT…PPRF, SEQI…SLQF, DQDV…IPEF, QHLP…NPLF, QSPY…PPTF, SQLV…PPKF, REPQ…SPEF, QQNV…APQF, KASG…LPKF, SEPL…RPVF, EADP…PPRF, ASED…SPQC, SQLL…APRF, FPSH…LPIF, LNAE…HPRF, THDL…PPRF, FQLN…PPST, and LPLE…VPQQ. N459, N568, N627, and N789 each carry an N-linked (GlcNAc...) asparagine glycan. N-linked (GlcNAc...) asparagine glycosylation occurs at N996. Residues N1175, N1276, and N1417 are each glycosylated (N-linked (GlcNAc...) asparagine). Residues N1899, N1998, N2007, N2102, N2165, N2183, N2325, N2368, N2387, N2430, N2470, N2547, and N2597 are each glycosylated (N-linked (GlcNAc...) asparagine). N-linked (GlcNAc...) asparagine glycans are attached at residues N3127, N3278, and N3312. N3432, N3603, N3770, N3774, N3815, N3842, N3875, and N3906 each carry an N-linked (GlcNAc...) asparagine glycan. Residues 3775-3946 form the Laminin G-like domain; that stretch reads GTTLRFSGQS…RLETWALSQC (172 aa). 4 disulfide bridges follow: C3914/C3946, C3953/C3964, C3958/C3974, and C3976/C3985. 2 EGF-like domains span residues 3949–3986 and 3988–4024; these read PGTA…RNCE and GREN…DRCE. Residue N3991 is glycosylated (N-linked (GlcNAc...) asparagine). Disulfide bonds link C3992-C4003, C3997-C4012, and C4014-C4023. The helical transmembrane segment at 4051 to 4071 threads the bilayer; the sequence is FLVITVALPLVIIATVGLLLY. Residues 4072–4351 lie on the Cytoplasmic side of the membrane; the sequence is CRRRKSHKPV…DYGSCEEVMF (280 aa). The segment at 4316-4340 is disordered; it reads VNGGPATGRSQPRAPPNYEGSDMVE.

Homodimer. In terms of tissue distribution, cerebellum-specific expression. Expressed in thin parallel fibers of cerebellar granule cells.

It is found in the cell membrane. Its subcellular location is the cell junction. The protein resides in the golgi apparatus. The protein localises to the trans-Golgi network. Involved in the regulation of cell migration. May be involved in mediating the organization of the parallel fibers of granule cells during cerebellar development. This is Protocadherin Fat 2 (Fat2) from Rattus norvegicus (Rat).